We begin with the raw amino-acid sequence, 168 residues long: Photosystem I assembly protein Ycf3 (168 aa).

3 TPR repeats span residues 35 to 68 (AFTY…EIDP), 72 to 105 (SYIL…NPFL), and 120 to 153 (GEQA…TPGN).

It belongs to the Ycf3 family.

The protein localises to the plastid membrane. In terms of biological role, essential for the assembly of the photosystem I (PSI) complex. May act as a chaperone-like factor to guide the assembly of the PSI subunits. The polypeptide is Photosystem I assembly protein Ycf3 (Cuscuta reflexa (Southern Asian dodder)).